Here is a 216-residue protein sequence, read N- to C-terminus: CsgBAC operon transcriptional regulatory protein (216 aa).

One can recognise an HTH luxR-type domain in the interval 149-214 (NSTESALLTH…QAVSWANDNL (66 aa)). The segment at residues 173–192 (NNEIARSLFISENTVKTHLY) is a DNA-binding region (H-T-H motif).

It is found in the cell inner membrane. The master regulator for adhesive curli fimbriae expression; necessary for transcription of the csgBAC/ymdA operon. Plays a positive role in biofilm formation. May have the capability to respond to starvation and/or high cell density by activating csgBA transcription. Low-level constitutive expression confers an adherent curli fimbriae-expressing phenotype, up-regulates 10 genes and down-regulates 14 others. The protein is CsgBAC operon transcriptional regulatory protein (csgD) of Escherichia coli (strain K12).